A 928-amino-acid polypeptide reads, in one-letter code: Interphotoreceptor matrix proteoglycan 1 (928 aa).

The signal sequence occupies residues 1 to 20; the sequence is MHLKTGLIFLAICLALQVQG. Residues 26 to 50 form a disordered region; that stretch reads SKTNHGEAKQLADASGSDKTERTTK. Residues 29–49 are compositionally biased toward basic and acidic residues; it reads NHGEAKQLADASGSDKTERTT. An N-linked (GlcNAc...) asparagine glycan is attached at N143. Residues 164-182 are compositionally biased toward basic and acidic residues; the sequence is QERKDEISTDKTGGKKLED. Positions 164 to 191 are disordered; the sequence is QERKDEISTDKTGGKKLEDIPSVSTGPP. N203 and N212 each carry an N-linked (GlcNAc...) asparagine glycan. Positions 231–356 constitute an SEA 1 domain; that stretch reads AEQMVEFSVT…TKLTVTDLQQ (126 aa). Disordered stretches follow at residues 441–481 and 494–522; these read LSRE…TEDI and ALVSTDSPAKPEDSYLPPPADESDSNDLI. Positions 466–477 are enriched in basic and acidic residues; that stretch reads PSREPPHDRSPD. Residues 735 to 848 enclose the SEA 2 domain; sequence KELVVFFSLR…YSLDIEPADQ (114 aa). N756 and N780 each carry an N-linked (GlcNAc...) asparagine glycan. The Heparin- and hyaluronan-binding motif lies at 785 to 793; the sequence is KQLEILNFR. N-linked (GlcNAc...) asparagine glycans are attached at residues N794 and N812.

In terms of processing, highly glycosylated (N- and O-linked carbohydrates and sialic acid). Abundantly expressed in the retina (at protein level). Localizes to the photoreceptor layer of the interphotoreceptor matrix of the retina (at protein level).

Its subcellular location is the cell projection. The protein localises to the cilium. It is found in the photoreceptor outer segment. The protein resides in the secreted. It localises to the extracellular space. Its subcellular location is the extracellular matrix. The protein localises to the interphotoreceptor matrix. It is found in the photoreceptor inner segment. Its function is as follows. Chondroitin sulfate-, heparin- and hyaluronan-binding protein. May serve to form a basic macromolecular scaffold comprising the insoluble interphotoreceptor matrix. The protein is Interphotoreceptor matrix proteoglycan 1 of Gallus gallus (Chicken).